Here is a 216-residue protein sequence, read N- to C-terminus: LexA repressor (216 aa).

A DNA-binding region (H-T-H motif) is located at residues 28 to 48 (RAEIAAEFGFSSPNAAEEHLR). Residues serine 134 and lysine 171 each act as for autocatalytic cleavage activity in the active site.

It belongs to the peptidase S24 family. As to quaternary structure, homodimer.

It carries out the reaction Hydrolysis of Ala-|-Gly bond in repressor LexA.. In terms of biological role, represses a number of genes involved in the response to DNA damage (SOS response), including recA and lexA. In the presence of single-stranded DNA, RecA interacts with LexA causing an autocatalytic cleavage which disrupts the DNA-binding part of LexA, leading to derepression of the SOS regulon and eventually DNA repair. The chain is LexA repressor from Ralstonia nicotianae (strain ATCC BAA-1114 / GMI1000) (Ralstonia solanacearum).